Consider the following 300-residue polypeptide: MIQEGKLEQQFFDYLHSERNYSVNTSTAYENDLLDFRRFLNEQAITTYQQVTFLDVRIYLTELKQKSFSRTTVARKISSLRSFYTFLLRENVINENPFTYVSHAKNQLRLPKFFYSEEMEALFQVVYEDNETLTLRDRVLLEVLYGTGIRVSECAGILLPDLDTSYQAILIRGKGNKERYVPFGAYAEDAITDYLPERVNLMSRYKKSHDALLVNHYGDPLTTRGIRYCLTKIISKASLTRKIHPHMLRHTFATDLLNNGADMRTVQELLGHASLSSTQIYTHVTKEHLKSTYMKHHPRA.

The 87-residue stretch at 2–88 (IQEGKLEQQF…SLRSFYTFLL (87 aa)) folds into the Core-binding (CB) domain. The Tyr recombinase domain maps to 109 to 294 (RLPKFFYSEE…TKEHLKSTYM (186 aa)). Residues Arg-150, Lys-174, His-246, Arg-249, and His-272 contribute to the active site. The active-site O-(3'-phospho-DNA)-tyrosine intermediate is Tyr-281.

The protein belongs to the 'phage' integrase family. XerC subfamily. As to quaternary structure, forms a cyclic heterotetrameric complex composed of two molecules of XerC and two molecules of XerD.

Its subcellular location is the cytoplasm. In terms of biological role, site-specific tyrosine recombinase, which acts by catalyzing the cutting and rejoining of the recombining DNA molecules. The XerC-XerD complex is essential to convert dimers of the bacterial chromosome into monomers to permit their segregation at cell division. It also contributes to the segregational stability of plasmids. The chain is Tyrosine recombinase XerC from Listeria monocytogenes serovar 1/2a (strain ATCC BAA-679 / EGD-e).